The following is a 140-amino-acid chain: Nucleoside diphosphate kinase (140 aa).

ATP contacts are provided by Lys-11, Phe-59, Arg-87, Thr-93, Arg-104, and Asn-114. His-117 functions as the Pros-phosphohistidine intermediate in the catalytic mechanism.

The protein belongs to the NDK family. Homotetramer. Mg(2+) serves as cofactor.

It is found in the cytoplasm. The enzyme catalyses a 2'-deoxyribonucleoside 5'-diphosphate + ATP = a 2'-deoxyribonucleoside 5'-triphosphate + ADP. It carries out the reaction a ribonucleoside 5'-diphosphate + ATP = a ribonucleoside 5'-triphosphate + ADP. Major role in the synthesis of nucleoside triphosphates other than ATP. The ATP gamma phosphate is transferred to the NDP beta phosphate via a ping-pong mechanism, using a phosphorylated active-site intermediate. This chain is Nucleoside diphosphate kinase, found in Rhodopseudomonas palustris (strain BisB5).